The following is a 526-amino-acid chain: Peptide chain release factor 3 (526 aa).

Positions 9–277 (NKRRTFAIIS…DFVEYAPGPQ (269 aa)) constitute a tr-type G domain. GTP-binding positions include 18 to 25 (SHPDAGKT), 86 to 90 (DTPGH), and 140 to 143 (NKLD).

Belongs to the TRAFAC class translation factor GTPase superfamily. Classic translation factor GTPase family. PrfC subfamily.

The protein localises to the cytoplasm. In terms of biological role, increases the formation of ribosomal termination complexes and stimulates activities of RF-1 and RF-2. It binds guanine nucleotides and has strong preference for UGA stop codons. It may interact directly with the ribosome. The stimulation of RF-1 and RF-2 is significantly reduced by GTP and GDP, but not by GMP. In Legionella pneumophila (strain Lens), this protein is Peptide chain release factor 3.